We begin with the raw amino-acid sequence, 360 residues long: Peptide chain release factor 1 (360 aa).

Glutamine 235 is subject to N5-methylglutamine. Residues 284 to 304 form a disordered region; it reads KVDSERSADRKSQVGSGDRSE.

The protein belongs to the prokaryotic/mitochondrial release factor family. Post-translationally, methylated by PrmC. Methylation increases the termination efficiency of RF1.

The protein localises to the cytoplasm. In terms of biological role, peptide chain release factor 1 directs the termination of translation in response to the peptide chain termination codons UAG and UAA. The sequence is that of Peptide chain release factor 1 from Agrobacterium fabrum (strain C58 / ATCC 33970) (Agrobacterium tumefaciens (strain C58)).